A 1085-amino-acid chain; its full sequence is Aminopeptidase N (1085 aa).

Residues 1-30 constitute a signal peptide (required for ER targeting and membrane association; not cleaved); sequence MKLTKGCAYKYIIFTVLILANILYDNKKRC. A sufficient for targeting to the food vacuole region spans residues 1-200; sequence MKLTKGCAYK…VKKNEPKIHY (200 aa). Residues 108-130 are disordered; the sequence is EKGDNNNNNHQNNNGNDNKKRLG. Over residues 112-123 the composition is skewed to low complexity; that stretch reads NNNNNHQNNNGN. 4 residues coordinate a peptide: E319, G460, A461, and E463. H496 contacts Zn(2+). E497 serves as the catalytic Proton acceptor. The Zn(2+) site is built by H500 and E519.

This sequence belongs to the peptidase M1 family. As to quaternary structure, heterodimer of the p68 form and the p35 form which are derived from the p120 precursor. The cofactor is Zn(2+). In terms of processing, the full length protein appears to be cleaved into a 120 kDa precursor. This precursor is then proteolytically cleaved at the N-terminus generating a 96 kDa form which is further processed at the C-terminus into 68 kDa and 35 kDa forms that remain associated.

The protein localises to the parasitophorous vacuole membrane. It localises to the nucleus. The protein resides in the cytoplasm. Its subcellular location is the vacuole lumen. Inhibited by 1,10-phenanthroline, EDTA and bestatin. Inhibited by (Benzyl)Tyr-Ala (BTA). Activity is not affected by phosphoramidin, PMSF, leupeptin, iodoacetamide or pepstatin. Its function is as follows. Displays aminopeptidase activity with a broad substrate specificity. Preferentially, cleaves after Leu and Met, but also cleaves after Ala and Arg. Low activity towards Lys, Phe, Tyr, Trp, Gln, Ser and Gly and negligible activity towards Glu, Asp, Pro, Ile, Thr, Val, His and Asn. Has dipeptidase activity. Plays a role in the terminal stages of host hemoglobin digestion by cleaving the N-terminal residue of small hemoglobin-derived oligopeptides. In Plasmodium falciparum (isolate 3D7), this protein is Aminopeptidase N.